The chain runs to 383 residues: Queuine tRNA-ribosyltransferase (383 aa).

The Proton acceptor role is filled by Asp-92. Substrate-binding positions include 92–96 (DSGGF), Asp-146, Gln-190, and Gly-217. An RNA binding region spans residues 248-254 (GVGKPED). Asp-267 acts as the Nucleophile in catalysis. The tract at residues 272–276 (TRNAR) is RNA binding; important for wobble base 34 recognition. Zn(2+) is bound by residues Cys-310, Cys-312, Cys-315, and His-341.

The protein belongs to the queuine tRNA-ribosyltransferase family. Homodimer. Within each dimer, one monomer is responsible for RNA recognition and catalysis, while the other monomer binds to the replacement base PreQ1. Requires Zn(2+) as cofactor.

It carries out the reaction 7-aminomethyl-7-carbaguanine + guanosine(34) in tRNA = 7-aminomethyl-7-carbaguanosine(34) in tRNA + guanine. Its pathway is tRNA modification; tRNA-queuosine biosynthesis. Catalyzes the base-exchange of a guanine (G) residue with the queuine precursor 7-aminomethyl-7-deazaguanine (PreQ1) at position 34 (anticodon wobble position) in tRNAs with GU(N) anticodons (tRNA-Asp, -Asn, -His and -Tyr). Catalysis occurs through a double-displacement mechanism. The nucleophile active site attacks the C1' of nucleotide 34 to detach the guanine base from the RNA, forming a covalent enzyme-RNA intermediate. The proton acceptor active site deprotonates the incoming PreQ1, allowing a nucleophilic attack on the C1' of the ribose to form the product. After dissociation, two additional enzymatic reactions on the tRNA convert PreQ1 to queuine (Q), resulting in the hypermodified nucleoside queuosine (7-(((4,5-cis-dihydroxy-2-cyclopenten-1-yl)amino)methyl)-7-deazaguanosine). The protein is Queuine tRNA-ribosyltransferase of Psychrobacter sp. (strain PRwf-1).